The chain runs to 289 residues: 4-hydroxybenzoate octaprenyltransferase (289 aa).

9 helical membrane passes run 19 to 39 (IPIL…SHGL), 42 to 62 (ISYL…GCII), 85 to 105 (GQLS…VAFI), 107 to 127 (VLFL…LAIL), 134 to 154 (FFAI…FMAF), 165 to 185 (AWIF…IYAL), 211 to 231 (ILLF…YCDF), 233 to 253 (SFFY…YFLY), and 265 to 285 (FSAN…QYII).

The protein belongs to the UbiA prenyltransferase family. Mg(2+) serves as cofactor.

Its subcellular location is the cell inner membrane. The catalysed reaction is all-trans-octaprenyl diphosphate + 4-hydroxybenzoate = 4-hydroxy-3-(all-trans-octaprenyl)benzoate + diphosphate. The protein operates within cofactor biosynthesis; ubiquinone biosynthesis. Its function is as follows. Catalyzes the prenylation of para-hydroxybenzoate (PHB) with an all-trans polyprenyl group. Mediates the second step in the final reaction sequence of ubiquinone-8 (UQ-8) biosynthesis, which is the condensation of the polyisoprenoid side chain with PHB, generating the first membrane-bound Q intermediate 3-octaprenyl-4-hydroxybenzoate. This chain is 4-hydroxybenzoate octaprenyltransferase, found in Francisella tularensis subsp. holarctica (strain FTNF002-00 / FTA).